Reading from the N-terminus, the 362-residue chain is GMP reductase (362 aa).

Residues 26–27 (SR), Lys-78, 129–131 (DVA), and 180–181 (IG) contribute to the NADP(+) site. K(+) is bound by residues Gly-181, Gly-183, and Cys-186. Cys-186 functions as the Thioimidate intermediate in the catalytic mechanism. Thr-188 functions as the Proton donor/acceptor in the catalytic mechanism. Residue Arg-189 participates in K(+) binding. Residues 219–221 (DGG), 242–243 (GG), 268–270 (GMS), and 286–290 (RASEG) contribute to the GMP site. NADP(+) is bound by residues Met-269, 285 to 286 (YR), and 314 to 317 (STCT).

It belongs to the IMPDH/GMPR family.

The enzyme catalyses IMP + NH4(+) + NADP(+) = GMP + NADPH + 2 H(+). Functionally, catalyzes the irreversible NADPH-dependent deamination of GMP to IMP. It functions in the conversion of nucleobase, nucleoside and nucleotide derivatives of G to A nucleotides, and in maintaining the intracellular balance of A and G nucleotides. The polypeptide is GMP reductase (Phytophthora infestans (Potato late blight agent)).